Here is a 123-residue protein sequence, read N- to C-terminus: MARIKVHELRDKSKSDLSTQLKELKAELASLRVAKVTGGAPNKLSKIKVVRKSIAQVLTVSSQKQKSALREAYKNKKLLPLDLRPKKTRAIRRRLTKHQASLKTEREKKKDMYFPIRKYAIKV.

The protein belongs to the universal ribosomal protein uL29 family.

This is Large ribosomal subunit protein uL29x (RPL35C) from Arabidopsis thaliana (Mouse-ear cress).